Reading from the N-terminus, the 336-residue chain is Putative ataxin-3 homolog (336 aa).

Residues 10–193 (GGLLYHEVQE…KECPMATEGS (184 aa)) enclose the Josephin domain. Catalysis depends on C23, which acts as the Nucleophile. H132 functions as the Proton acceptor in the catalytic mechanism. N147 is an active-site residue. The region spanning 244–263 (QEEADLNAAIAASLMDTGGP) is the UIM domain. Positions 281-336 (IESTSGEMSKDGNLEEQGANKSETSEPNSDNIESASGSNPKQNTTSLEGKESIKED) are disordered. Residues 299–327 (ANKSETSEPNSDNIESASGSNPKQNTTSL) are compositionally biased toward polar residues.

Its subcellular location is the nucleus. It carries out the reaction Thiol-dependent hydrolysis of ester, thioester, amide, peptide and isopeptide bonds formed by the C-terminal Gly of ubiquitin (a 76-residue protein attached to proteins as an intracellular targeting signal).. Its function is as follows. Interacts with key regulators of transcription and represses transcription. Acts as a histone-binding protein that regulates transcription. Acts as a deubiquitinating enzyme. The chain is Putative ataxin-3 homolog from Oryza sativa subsp. japonica (Rice).